A 967-amino-acid chain; its full sequence is RNA polymerase II C-terminal domain phosphatase-like 1 (967 aa).

The Nuclear localization signal (NLS) motif lies at 38–41 (RKKK). Residues 151–401 (LNLRCLGIVF…TPVLCVARNV (251 aa)) form the FCP1 homology domain. Disordered stretches follow at residues 548 to 611 (SEPS…VQSR) and 643 to 712 (MEKH…RNSD). A compositionally biased stretch (pro residues) spans 590–603 (PSEPSFPQRPPVQA). A compositionally biased stretch (basic and acidic residues) spans 665–684 (RMLHENRRPPKESLRRDEQL). 2 consecutive DRBM domains span residues 724–792 (TETS…NLAD) and 855–925 (GSIT…SVRS). The interval 928-967 (GQPLHKRQGSPRSFGGMSNKRLKPDFQRSLQRMPSSGRYS) is disordered. The tract at residues 945–967 (SNKRLKPDFQRSLQRMPSSGRYS) is required for nuclear localization (NLS). The Nuclear localization signal (NLS) signature appears at 947–951 (KRLKP). The span at 955-967 (RSLQRMPSSGRYS) shows a compositional bias: polar residues.

In terms of assembly, interacts with FREE1, ANAC019, MYB3, MYB4 and MYB32. Binds to DMS3. Interacts with RCF3. Interacts with RS40 and RS41. Interacts with EIF4A3. Interacts with UPF3. The cofactor is Mg(2+). Requires Co(2+) as cofactor. Mn(2+) serves as cofactor. Expressed at very low levels in roots, leaves, stems, flowers and siliques.

It is found in the nucleus. The protein localises to the nucleus speckle. It carries out the reaction O-phospho-L-seryl-[protein] + H2O = L-seryl-[protein] + phosphate. The enzyme catalyses O-phospho-L-threonyl-[protein] + H2O = L-threonyl-[protein] + phosphate. In terms of biological role, processively dephosphorylates 'Ser-5' but not 'Ser-2' of the heptad repeats YSPTSPS in the C-terminal domain of the largest RNA polymerase II subunit (RPB1). This promotes the activity of RNA polymerase II. Together with CPL2, required for male gametes fertility. Multifunctional regulator that modulates plant growth, stress, and phytohormones responses. Negative regulator of stress gene transcription involved in abscisic acid (ABA) mediated and jasmonic acid (JA) mediated signaling pathways, NaCl, osmotic stress, wounding, and cold resistance. Negatively regulates the expression of jasmonic acid (JA) biosynthetic genes in response to wounding. Forms a complex with RCF3 that modulates co-transcriptional processes such as mRNA capping and polyadenylation, and functions to repress stress-inducible gene expression. Dephosphorylates RCF3. Involved in the dephosphorylation of EIF4A3. This dephosphorylation retains EIF4A3 in the nucleus and limits its accumulation in the cytoplasm. Is essential for the degradation of the nonsense-mediated mRNA decay (NMD) transcripts. The polypeptide is RNA polymerase II C-terminal domain phosphatase-like 1 (Arabidopsis thaliana (Mouse-ear cress)).